We begin with the raw amino-acid sequence, 248 residues long: tRNA (guanine-N(1)-)-methyltransferase (248 aa).

S-adenosyl-L-methionine is bound by residues Gly-113 and Ile-133–Leu-138.

The protein belongs to the RNA methyltransferase TrmD family. In terms of assembly, homodimer.

It is found in the cytoplasm. It catalyses the reaction guanosine(37) in tRNA + S-adenosyl-L-methionine = N(1)-methylguanosine(37) in tRNA + S-adenosyl-L-homocysteine + H(+). Its function is as follows. Specifically methylates guanosine-37 in various tRNAs. The chain is tRNA (guanine-N(1)-)-methyltransferase from Dehalococcoides mccartyi (strain ATCC BAA-2100 / JCM 16839 / KCTC 5957 / BAV1).